The sequence spans 208 residues: Small ribosomal subunit protein uS4 (208 aa).

Residues 99 to 165 enclose the S4 RNA-binding domain; that stretch reads RRLDNVVFQL…PRLKEILSSL (67 aa).

The protein belongs to the universal ribosomal protein uS4 family. In terms of assembly, part of the 30S ribosomal subunit. Contacts protein S5. The interaction surface between S4 and S5 is involved in control of translational fidelity.

One of the primary rRNA binding proteins, it binds directly to 16S rRNA where it nucleates assembly of the body of the 30S subunit. Its function is as follows. With S5 and S12 plays an important role in translational accuracy. The chain is Small ribosomal subunit protein uS4 from Desulfitobacterium hafniense (strain DSM 10664 / DCB-2).